A 121-amino-acid polypeptide reads, in one-letter code: Large ribosomal subunit protein bL12 (121 aa).

Belongs to the bacterial ribosomal protein bL12 family. Homodimer. Part of the ribosomal stalk of the 50S ribosomal subunit. Forms a multimeric L10(L12)X complex, where L10 forms an elongated spine to which 2 to 4 L12 dimers bind in a sequential fashion. Binds GTP-bound translation factors.

In terms of biological role, forms part of the ribosomal stalk which helps the ribosome interact with GTP-bound translation factors. Is thus essential for accurate translation. The polypeptide is Large ribosomal subunit protein bL12 (Mesomycoplasma hyopneumoniae (strain 232) (Mycoplasma hyopneumoniae)).